A 62-amino-acid polypeptide reads, in one-letter code: Conotoxin Mi5.2 (62 aa).

An N-terminal signal peptide occupies residues 1–19; that stretch reads MRCVPVFIILLLLIPSASS. A propeptide spanning residues 20–50 is cleaved from the precursor; sequence VDVQPLTRDDVPLASFLDDARRTLRSPWMTR.

This sequence belongs to the conotoxin T superfamily. Contains 2 disulfide bonds that can be either 'C1-C3, C2-C4' or 'C1-C4, C2-C3', since these disulfide connectivities have been observed for conotoxins with cysteine framework V (for examples, see AC P0DQQ7 and AC P81755). Expressed by the venom duct.

It localises to the secreted. This Conus miles (Soldier cone) protein is Conotoxin Mi5.2.